Reading from the N-terminus, the 130-residue chain is Small ribosomal subunit protein uS8 (130 aa).

It belongs to the universal ribosomal protein uS8 family.

This chain is Small ribosomal subunit protein uS8 (RPS22A), found in Eremothecium gossypii (strain ATCC 10895 / CBS 109.51 / FGSC 9923 / NRRL Y-1056) (Yeast).